Consider the following 775-residue polypeptide: Polyribonucleotide nucleotidyltransferase (775 aa).

The Mg(2+) site is built by Asp-487 and Asp-493. Residues 554–613 form the KH domain; that stretch reads PKVEVVDVPEEKAPLIIGPGGSTVKKIYDETGVKVWVGEQGKVYLFVFPGGDVEKAKQMI. 2 S1 motif domains span residues 623–693 and 707–775; these read GAVY…IGIE and GDVY…TDDV.

The protein belongs to the polyribonucleotide nucleotidyltransferase family. The cofactor is Mg(2+).

The protein resides in the cytoplasm. The catalysed reaction is RNA(n+1) + phosphate = RNA(n) + a ribonucleoside 5'-diphosphate. Its function is as follows. Involved in mRNA degradation. Catalyzes the phosphorolysis of single-stranded polyribonucleotides processively in the 3'- to 5'-direction. This Aquifex aeolicus (strain VF5) protein is Polyribonucleotide nucleotidyltransferase.